The chain runs to 294 residues: Bifunctional protein FolD (294 aa).

NADP(+) is bound by residues 166–168, serine 191, and isoleucine 232; that span reads GRS.

Belongs to the tetrahydrofolate dehydrogenase/cyclohydrolase family. In terms of assembly, homodimer.

It catalyses the reaction (6R)-5,10-methylene-5,6,7,8-tetrahydrofolate + NADP(+) = (6R)-5,10-methenyltetrahydrofolate + NADPH. It carries out the reaction (6R)-5,10-methenyltetrahydrofolate + H2O = (6R)-10-formyltetrahydrofolate + H(+). The protein operates within one-carbon metabolism; tetrahydrofolate interconversion. Its function is as follows. Catalyzes the oxidation of 5,10-methylenetetrahydrofolate to 5,10-methenyltetrahydrofolate and then the hydrolysis of 5,10-methenyltetrahydrofolate to 10-formyltetrahydrofolate. The chain is Bifunctional protein FolD from Afipia carboxidovorans (strain ATCC 49405 / DSM 1227 / KCTC 32145 / OM5) (Oligotropha carboxidovorans).